The chain runs to 134 residues: Prefoldin subunit 4 (134 aa).

Ala-2 is modified (N-acetylalanine). Ser-125 carries the post-translational modification Phosphoserine.

This sequence belongs to the prefoldin subunit beta family. Heterohexamer of two PFD-alpha type and four PFD-beta type subunits. Interacts with URI1; the interaction is phosphorylation-dependent and occurs in a growth-dependent manner.

The protein localises to the nucleus. Its subcellular location is the cytoplasm. It is found in the mitochondrion. Its function is as follows. Binds specifically to cytosolic chaperonin (c-CPN) and transfers target proteins to it. Binds to nascent polypeptide chain and promotes folding in an environment in which there are many competing pathways for nonnative proteins. This chain is Prefoldin subunit 4 (PFDN4), found in Homo sapiens (Human).